The primary structure comprises 160 residues: uncharacterized protein (160 aa).

The Zn(2+) site is built by C26, C28, C50, and H61. The GRF-type; atypical zinc finger occupies 26 to 69 (CWCGEEIITFTSKTKENPYRRFYRCAIAMKRENEEHLFKWVDEA).

This is an uncharacterized protein from Arabidopsis thaliana (Mouse-ear cress).